A 238-amino-acid polypeptide reads, in one-letter code: Snake venom metalloproteinase HF-1 (238 aa).

Positions 17–221 (RYIQLVVVAD…YNPQCILNKP (205 aa)) constitute a Peptidase M12B domain. Aspartate 106 is a Ca(2+) binding site. Disulfide bonds link cysteine 130–cysteine 216 and cysteine 174–cysteine 181. Position 158 (histidine 158) interacts with Zn(2+). Glutamate 159 is a catalytic residue. Positions 162 and 168 each coordinate Zn(2+). The Ca(2+) site is built by cysteine 216 and asparagine 219.

Monomer. Zn(2+) serves as cofactor. As to expression, expressed by the venom gland.

The protein localises to the secreted. With respect to regulation, inhibited by EDTA and EGTA. Inhibited by serum and antihemorrhagic factors Da2-I and Da2-II from D.albiventris. Not inhibited by PMSF or SBT-I. In terms of biological role, snake venom zinc metalloprotease that is weakly hemorrhagic and has Aalpha, Bbeta fibrinogenolytic activities. Cleaves the Aalpha chain of fibrinogen first, followed by the Bbeta chain and shows no effect on the gamma chain. Has caseinolytic activity. Induces dose-dependent edema. The chain is Snake venom metalloproteinase HF-1 from Bothrops marajoensis (Marajo lancehead).